We begin with the raw amino-acid sequence, 273 residues long: Urease accessory protein UreD (273 aa).

Belongs to the UreD family. In terms of assembly, ureD, UreF and UreG form a complex that acts as a GTP-hydrolysis-dependent molecular chaperone, activating the urease apoprotein by helping to assemble the nickel containing metallocenter of UreC. The UreE protein probably delivers the nickel.

It localises to the cytoplasm. Its function is as follows. Required for maturation of urease via the functional incorporation of the urease nickel metallocenter. The sequence is that of Urease accessory protein UreD from Bacillus cereus (strain ATCC 10987 / NRS 248).